The primary structure comprises 264 residues: Indolethylamine N-methyltransferase (264 aa).

The residue at position 14 (K14) is an N6-succinyllysine. S-adenosyl-L-methionine contacts are provided by residues Y21, Y26, 64 to 65, Y70, D86, and N91; that span reads GS. Position 97 is an N6-succinyllysine (K97). S-adenosyl-L-methionine-binding positions include 143–144 and F164; that span reads DV.

It belongs to the class I-like SAM-binding methyltransferase superfamily. NNMT/PNMT/TEMT family. In terms of assembly, monomer. In terms of tissue distribution, detected in lung and liver (at protein level).

It localises to the cytoplasm. It carries out the reaction a tertiary amine + S-adenosyl-L-methionine = a methylated tertiary amine + S-adenosyl-L-homocysteine + H(+). It catalyses the reaction a secondary amine + S-adenosyl-L-methionine = a methylated secondary amine + S-adenosyl-L-homocysteine + H(+). The enzyme catalyses a primary amine + S-adenosyl-L-methionine = a methylated primary amine + S-adenosyl-L-homocysteine + H(+). The catalysed reaction is dimethyl sulfide + S-adenosyl-L-methionine = trimethylsulfonium + S-adenosyl-L-homocysteine. Inhibited by the S-adenosyl-L-methionine analog sinefungin and by the product S-adenosyl-L-homocysteine. In terms of biological role, catalyzes the N-methylation of tryptamine and structurally related compounds. Functions as a thioether S-methyltransferase and is active with a variety of thioethers and the corresponding selenium and tellurium compounds, including 3-methylthiopropionaldehyde, dimethyl selenide, dimethyl telluride, 2-methylthioethylamine, 2-methylthioethanol, methyl-n-propyl sulfide and diethyl sulfide. Plays an important role in the detoxification of selenium compounds. The polypeptide is Indolethylamine N-methyltransferase (Inmt) (Mus musculus (Mouse)).